The following is a 576-amino-acid chain: Flagellin B (576 aa).

The protein belongs to the bacterial flagellin family. As to quaternary structure, heteromer of FlaA and FlaB. Interacts with FliW. Interacts with FliS.

It is found in the secreted. The protein resides in the bacterial flagellum. Flagellin is the subunit protein which polymerizes to form the filaments of bacterial flagella. The chain is Flagellin B (flaB) from Campylobacter jejuni subsp. jejuni serotype O:6 (strain 81116 / NCTC 11828).